The primary structure comprises 153 residues: Prostaglandin E synthase (153 aa).

The Lumenal segment spans residues 1-13; sequence MPPPVLALVSGQA. A helical membrane pass occupies residues 14 to 42; that stretch reads LPAFLLCSTLLVIKMYVVAVITGQVRLRK. Arginine 39 provides a ligand contact to glutathione. Topologically, residues 43–61 are cytoplasmic; the sequence is KAFANPEDALRHGGLQYCR. A helical transmembrane segment spans residues 62 to 91; that stretch reads SDQDVDRCLRAHRNDMETIYPFLFLGFVYS. 74-78 provides a ligand contact to glutathione; that stretch reads RNDME. The Lumenal segment spans residues 92-96; that stretch reads FLGPD. The helical transmembrane segment at 97-120 threads the bilayer; that stretch reads PFIAQMHFLVFFLGRMVHTVAYLG. 2 residues coordinate glutathione: histidine 114 and tyrosine 118. Topologically, residues 121–124 are cytoplasmic; it reads KLRA. Residues 125 to 153 traverse the membrane as a helical segment; that stretch reads PTRSLAYTVAQLPCASMALQIVWEAACHL. 127 to 131 provides a ligand contact to glutathione; that stretch reads RSLAY.

It belongs to the MAPEG family. In terms of assembly, homotrimer. The cofactor is glutathione.

Its subcellular location is the membrane. It is found in the cytoplasm. It localises to the perinuclear region. It carries out the reaction prostaglandin H2 = prostaglandin E2. The catalysed reaction is 2-glyceryl-prostaglandin H2 = 2-glyceryl-prostaglandin E2. The enzyme catalyses prostaglandin G2 = (15S)-15-hydroperoxy-prostaglandin E2. It catalyses the reaction 1-chloro-2,4-dinitrobenzene + glutathione = 2,4-dinitrophenyl-S-glutathione + chloride + H(+). It carries out the reaction (5S)-hydroperoxy-(6E,8Z,11Z,14Z)-eicosatetraenoate + 2 glutathione = (5S)-hydroxy-(6E,8Z,11Z,14Z)-eicosatetraenoate + glutathione disulfide + H2O. It participates in lipid metabolism; prostaglandin biosynthesis. In terms of biological role, terminal enzyme of the cyclooxygenase (COX)-2-mediated prostaglandin E2 (PGE2) biosynthetic pathway. Catalyzes the glutathione-dependent oxidoreduction of prostaglandin endoperoxide H2 (PGH2) to prostaglandin E2 (PGE2) in response to inflammatory stimuli. Plays a key role in inflammation response, fever and pain. Also catalyzes the oxidoreduction of endocannabinoids into prostaglandin glycerol esters and PGG2 into 15-hydroperoxy-PGE2. In addition, displays low glutathione transferase and glutathione-dependent peroxidase activities, toward 1-chloro-2,4-dinitrobenzene and 5-hydroperoxyicosatetraenoic acid (5-HPETE), respectively. The sequence is that of Prostaglandin E synthase (PTGES) from Canis lupus familiaris (Dog).